Reading from the N-terminus, the 264-residue chain is Nuclear egress protein 1 (264 aa).

Basic residues predominate over residues 1–12 (MTVHKNRFRRSR). The tract at residues 1-22 (MTVHKNRFRRSRSLSVTHRIQK) is disordered. Residues 83 to 187 (CLEFSPYANE…HIVFQSRTLH (105 aa)) form a CCCH-type zinc finger.

This sequence belongs to the herpesviridae NEC1 protein family. Forms a heterohexameric complex with NEC2. Interacts with capsid vertex specific component 2/CVC2; this interaction directs the capsid to the host inner nuclear membrane to initiate budding. Post-translationally, phosphorylated at serine residues in the N-terminus. This phosphorylation regulates the localization within the inner nuclear membrane.

The protein localises to the host nucleus inner membrane. Its function is as follows. Plays an essential role in virion nuclear egress, the first step of virion release from infected cell. Within the host nucleus, NEC1 interacts with the newly formed capsid through the vertexes and directs it to the inner nuclear membrane by associating with NEC2. Induces the budding of the capsid at the inner nuclear membrane as well as its envelopment into the perinuclear space. There, the NEC1/NEC2 complex promotes the fusion of the enveloped capsid with the outer nuclear membrane and the subsequent release of the viral capsid into the cytoplasm where it will reach the secondary budding sites in the host Golgi or trans-Golgi network. The chain is Nuclear egress protein 1 from Human herpesvirus 6B (HHV-6 variant B).